A 216-amino-acid polypeptide reads, in one-letter code: Probable GTP-binding protein EngB (216 aa).

The EngB-type G domain occupies 27–201; sequence GGVEIAFAGR…AQTLTGWYLA (175 aa). GTP-binding positions include 35-42, 62-66, 80-83, 147-150, and 180-182; these read GRSNAGKS, GRTQL, DLPG, TKAD, and FSS. S42 and T64 together coordinate Mg(2+).

Belongs to the TRAFAC class TrmE-Era-EngA-EngB-Septin-like GTPase superfamily. EngB GTPase family. It depends on Mg(2+) as a cofactor.

Necessary for normal cell division and for the maintenance of normal septation. The polypeptide is Probable GTP-binding protein EngB (Aeromonas hydrophila subsp. hydrophila (strain ATCC 7966 / DSM 30187 / BCRC 13018 / CCUG 14551 / JCM 1027 / KCTC 2358 / NCIMB 9240 / NCTC 8049)).